We begin with the raw amino-acid sequence, 937 residues long: ABC transporter A family member 4 (937 aa).

The next 7 helical transmembrane spans lie at 34–54 (LIVI…LFDT), 340–360 (IASV…FPVI), 394–414 (FLAI…AIGL), 423–443 (SIQF…AFLV), 455–475 (VAAY…FQFM), 478–498 (GLSF…FSLY), and 528–548 (AMDE…IAAY). Residues 618–852 (DKLKKVYPGR…YGGSYVLTMT (235 aa)) form the ABC transporter domain. 653–660 (GPNGAGKT) serves as a coordination point for ATP.

Belongs to the ABC transporter superfamily. ABCA family. CPR flippase (TC 3.A.1.211) subfamily.

It localises to the membrane. The protein is ABC transporter A family member 4 (ABCA4) of Arabidopsis thaliana (Mouse-ear cress).